Reading from the N-terminus, the 806-residue chain is MDPNNKVSINKNMGLLRKCLCHDEYNKKRFCYSRFHHKTLLYKQLYEISKILRRLNSGLDMWCLRDAIISALGAMHDAPHVDRLLGQFYLKTNSASEFDSISLILESENILQKELIEFVRDSKVELEKILQAAIHVWRAKFSPGVLAASRFLDEISNSFNGIEENIPTIFLRISVTLASQIKKIEYLQKSFVSHKCPLVEEILILLYKRVCMLPFPCMSNLGLVSEKKSVFDTVFHNVSNFSLEDFLDINSGFFLPAMLNGSYVSVNLTRYHYEAESLMELLLSQLQIVEKDTNKTTGLTIYLEIWHLSLLMWLDFCEILPTTVQVKFCLILPEIFMERLKTENSYWSVFHKALAINLGLYDESDFTSKYLECERTAEHARIKTETLLDNICRCLRRGQMGFIFRKNIHKYSMLPQIASYCLGNSMDVIPFEYGLNTAFRIALNLSYFVENVSEEQKSHTNIDMFHYRDKIFNLKKMRKTVTELVLIGNAVIDYALENRDFLMDGIVNARSLAICVTGLHSALMSMNLPFNSQLGCQLYRIVCENIYYSSVRTSMNCCKKGAEPCSFFQRSKYAQGILHCDLYDNVEYTLPNVLWTNLRSDIKKYGLRNLTFVSGSAMSKEFDLLNCSQSFCPIEGNKILKRSSIKVLHPNPVFHSDLSVYSTELQTLYIPVYNGLFLNRFKNHLEYLSSVNYDVSKVNKNLFSEEEMQEMTIFLNAFDYSVNEMLNMYVGALPFTDHGQANVFFINKTENMRDILVCLYQNGFKTGIYQAVYKNQKCDGVNPSKKFDLLSGFSDGVVMSTMHVFQ.

The protein belongs to the ribonucleoside diphosphate reductase large chain family.

The protein resides in the virion. It localises to the host cytoplasm. Its function is as follows. Does not possess a ribonucleotide reductase activity. Betaherpesviruses probably use another strategy to expand the dNTP pool in a quiescent host cell. This is Ribonucleoside-diphosphate reductase large subunit-like protein from Human herpesvirus 7 (strain JI) (HHV-7).